Reading from the N-terminus, the 122-residue chain is Large ribosomal subunit protein uL14 (122 aa).

The protein belongs to the universal ribosomal protein uL14 family. Part of the 50S ribosomal subunit. Forms a cluster with proteins L3 and L19. In the 70S ribosome, L14 and L19 interact and together make contacts with the 16S rRNA in bridges B5 and B8.

Binds to 23S rRNA. Forms part of two intersubunit bridges in the 70S ribosome. This Rhizobium meliloti (strain 1021) (Ensifer meliloti) protein is Large ribosomal subunit protein uL14.